The sequence spans 510 residues: Kynurenine 3-monooxygenase (510 aa).

The protein belongs to the aromatic-ring hydroxylase family. KMO subfamily. FAD serves as cofactor.

Its subcellular location is the mitochondrion outer membrane. It carries out the reaction L-kynurenine + NADPH + O2 + H(+) = 3-hydroxy-L-kynurenine + NADP(+) + H2O. It functions in the pathway cofactor biosynthesis; NAD(+) biosynthesis; quinolinate from L-kynurenine: step 1/3. In terms of biological role, catalyzes the hydroxylation of L-kynurenine (L-Kyn) to form 3-hydroxy-L-kynurenine (L-3OHKyn). Required for synthesis of quinolinic acid. The chain is Kynurenine 3-monooxygenase (bna4) from Aspergillus oryzae (strain ATCC 42149 / RIB 40) (Yellow koji mold).